The primary structure comprises 168 residues: Repressed By RIM101 protein 2 (168 aa).

The signal sequence occupies residues 1-24; the sequence is MRFAFTTVSLSLLLSSLVASDAAS. A glycan (N-linked (GlcNAc...) asparagine) is linked at Asn83. Residues 111 to 149 form a disordered region; it reads SGSASGSGSAKSTASAEKSSGSSASASSTAGGSSSKGGV. Ser143 carries GPI-anchor amidated serine lipidation. A propeptide spans 144–168 (removed in mature form); that stretch reads SSKGGVSELVAPVGAVVGALAVALM.

The protein belongs to the SRP1/TIP1 family. The GPI-anchor is attached to the protein in the endoplasmic reticulum and serves to target the protein to the cell surface. There, the glucosamine-inositol phospholipid moiety is cleaved off and the GPI-modified mannoprotein is covalently attached via its lipidless GPI glycan remnant to the 1,6-beta-glucan of the outer cell wall layer.

Its subcellular location is the secreted. The protein localises to the cell wall. It is found in the membrane. Functionally, probable cell wall protein which may have esterase activity, with a preference for esters of fatty acids from 4 to 16 carbon atoms. In Candida albicans (strain SC5314 / ATCC MYA-2876) (Yeast), this protein is Repressed By RIM101 protein 2 (RBR2).